A 463-amino-acid polypeptide reads, in one-letter code: O-acetyltransferase SAT5 (463 aa).

It belongs to the trichothecene 3-O-acetyltransferase family.

The protein operates within mycotoxin biosynthesis. O-acetyltransferase; part of the satratoxin SC1 cluster involved in the biosynthesis of satratoxins, trichothecene mycotoxins that are associated with human food poisonings. Satratoxins are suggested to be made by products of multiple gene clusters (SC1, SC2 and SC3) that encode 21 proteins in all, including polyketide synthases, acetyltransferases, and other enzymes expected to modify the trichothecene skeleton. SC1 encodes 10 proteins, SAT1 to SAT10. The largest are SAT8, which encodes a putative polyketide synthase (PKS) with a conventional non-reducing architecture, and SAT10, a putative protein containing four ankyrin repeats and thus may be involved in protein scaffolding. The putative short-chain reductase SAT3 may assist the PKS in some capacity. SAT6 contains a secretory lipase domain and acts probably as a trichothecene esterase. SAT5 encodes a putative acetyltransferase, and so, with SAT6, may affect endogenous protection from toxicity. The probable transcription factor SAT9 may regulate the expression of the SC1 cluster. SC2 encodes proteins SAT11 to SAT16, the largest of which encodes the putative reducing PKS SAT13. SAT11 is a cytochrome P450 monooxygenase, while SAT14 and SAT16 are probable acetyltransferases. The SC2 cluster may be regulated by the transcription factor SAT15. SC3 is a small cluster that encodes 5 proteins, SAT17 to SAT21. SAT21 is a putative MFS-type transporter which may have a role in exporting secondary metabolites. The four other proteins putatively encoded in SC3 include the taurine hydroxylase-like protein SAT17, the O-methyltransferase SAT18, the acetyltransferase SAT19, and the Cys6-type zinc finger SAT20, the latter being probably involved in regulation of SC3 expression. The chain is O-acetyltransferase SAT5 from Stachybotrys chartarum (strain CBS 109288 / IBT 7711) (Toxic black mold).